A 293-amino-acid polypeptide reads, in one-letter code: Pyridoxal 5'-phosphate synthase subunit PdxS (293 aa).

Residue aspartate 23 participates in D-ribose 5-phosphate binding. Residue lysine 80 is the Schiff-base intermediate with D-ribose 5-phosphate of the active site. Glycine 152 serves as a coordination point for D-ribose 5-phosphate. Arginine 164 is a binding site for D-glyceraldehyde 3-phosphate. D-ribose 5-phosphate contacts are provided by residues glycine 213 and 234–235; that span reads GS.

It belongs to the PdxS/SNZ family. In the presence of PdxT, forms a dodecamer of heterodimers.

It carries out the reaction aldehydo-D-ribose 5-phosphate + D-glyceraldehyde 3-phosphate + L-glutamine = pyridoxal 5'-phosphate + L-glutamate + phosphate + 3 H2O + H(+). The protein operates within cofactor biosynthesis; pyridoxal 5'-phosphate biosynthesis. Catalyzes the formation of pyridoxal 5'-phosphate from ribose 5-phosphate (RBP), glyceraldehyde 3-phosphate (G3P) and ammonia. The ammonia is provided by the PdxT subunit. Can also use ribulose 5-phosphate and dihydroxyacetone phosphate as substrates, resulting from enzyme-catalyzed isomerization of RBP and G3P, respectively. The sequence is that of Pyridoxal 5'-phosphate synthase subunit PdxS from Desulfovibrio desulfuricans (strain ATCC 27774 / DSM 6949 / MB).